The chain runs to 217 residues: GTP cyclohydrolase 1 (217 aa).

Positions 109, 112, and 180 each coordinate Zn(2+).

It belongs to the GTP cyclohydrolase I family. As to quaternary structure, toroid-shaped homodecamer, composed of two pentamers of five dimers.

It catalyses the reaction GTP + H2O = 7,8-dihydroneopterin 3'-triphosphate + formate + H(+). It participates in cofactor biosynthesis; 7,8-dihydroneopterin triphosphate biosynthesis; 7,8-dihydroneopterin triphosphate from GTP: step 1/1. The chain is GTP cyclohydrolase 1 from Photobacterium profundum (strain SS9).